The primary structure comprises 185 residues: NADH-quinone oxidoreductase subunit B (185 aa).

4 residues coordinate [4Fe-4S] cluster: cysteine 37, cysteine 38, cysteine 103, and cysteine 132.

The protein belongs to the complex I 20 kDa subunit family. In terms of assembly, NDH-1 is composed of 14 different subunits. Subunits NuoB, C, D, E, F, and G constitute the peripheral sector of the complex. The cofactor is [4Fe-4S] cluster.

Its subcellular location is the cell membrane. The enzyme catalyses a quinone + NADH + 5 H(+)(in) = a quinol + NAD(+) + 4 H(+)(out). Functionally, NDH-1 shuttles electrons from NADH, via FMN and iron-sulfur (Fe-S) centers, to quinones in the respiratory chain. The immediate electron acceptor for the enzyme in this species is believed to be a menaquinone. Couples the redox reaction to proton translocation (for every two electrons transferred, four hydrogen ions are translocated across the cytoplasmic membrane), and thus conserves the redox energy in a proton gradient. This Thermobifida fusca (strain YX) protein is NADH-quinone oxidoreductase subunit B.